We begin with the raw amino-acid sequence, 901 residues long: Dipeptidyl-aminopeptidase B (901 aa).

Positions 1–22 (MSSPRPSTSSTSSDSGLSVDTT) are enriched in low complexity. The disordered stretch occupies residues 1–67 (MSSPRPSTSS…EPFLPSAKKQ (67 aa)). Topologically, residues 1 to 76 (MSSPRPSTSS…QAASGSRTSR (76 aa)) are cytoplasmic. A helical; Signal-anchor for type II membrane protein membrane pass occupies residues 77–97 (LIWGLVILCVAGWLWGLVLFV). At 98–901 (TQNRSAQQSV…VKRSLPMLVN (804 aa)) the chain is on the vacuolar side. Asn334 and Asn625 each carry an N-linked (GlcNAc...) asparagine glycan. The Charge relay system role is filled by Ser739. A glycan (N-linked (GlcNAc...) asparagine) is linked at Asn793. Residues Asp816 and His849 each act as charge relay system in the active site.

This sequence belongs to the peptidase S9B family.

The protein localises to the vacuole membrane. The catalysed reaction is Release of an N-terminal dipeptide, Xaa-Yaa-|-Zaa-, from a polypeptide, preferentially when Yaa is Pro, provided Zaa is neither Pro nor hydroxyproline.. Type IV dipeptidyl-peptidase which removes N-terminal dipeptides sequentially from polypeptides having unsubstituted N-termini provided that the penultimate residue is proline. The sequence is that of Dipeptidyl-aminopeptidase B (dapB) from Aspergillus niger.